The following is a 72-amino-acid chain: MAKEDNIEMQGTILETLPNTMFRVELENGHVVIAHISGKMRKNYIRILTGDKVTVQLTPYDLSKGRIVFRAR.

In terms of domain architecture, S1-like spans 1–72; it reads MAKEDNIEMQ…SKGRIVFRAR (72 aa).

Belongs to the IF-1 family. Component of the 30S ribosomal translation pre-initiation complex which assembles on the 30S ribosome in the order IF-2 and IF-3, IF-1 and N-formylmethionyl-tRNA(fMet); mRNA recruitment can occur at any time during PIC assembly.

The protein localises to the cytoplasm. In terms of biological role, one of the essential components for the initiation of protein synthesis. Stabilizes the binding of IF-2 and IF-3 on the 30S subunit to which N-formylmethionyl-tRNA(fMet) subsequently binds. Helps modulate mRNA selection, yielding the 30S pre-initiation complex (PIC). Upon addition of the 50S ribosomal subunit IF-1, IF-2 and IF-3 are released leaving the mature 70S translation initiation complex. In Shewanella frigidimarina (strain NCIMB 400), this protein is Translation initiation factor IF-1.